A 192-amino-acid polypeptide reads, in one-letter code: HTH-type transcriptional repressor SCO4008 (192 aa).

The HTH tetR-type domain occupies 7 to 67 (EATKARIFEA…SVLEKKMLDL (61 aa)). Positions 30–49 (RIDRIAAEARANKQLIYAYY) form a DNA-binding region, H-T-H motif.

In terms of assembly, homodimer. Four dimers bind to the two operator sites.

Its activity is regulated as follows. Binding of a wide range of cationic hydrophobic compounds to SCO4008 causes a decrease in DNA-binding, probably via allosteric conformational change of SCO4008. Functionally, probably regulates the expression of its own gene and the adjacent SCO4007 gene by binding to two operator sites in the SCO4007-SCO4008 intergenic region. The sequence is that of HTH-type transcriptional repressor SCO4008 from Streptomyces coelicolor (strain ATCC BAA-471 / A3(2) / M145).